The chain runs to 154 residues: Deoxyuridine 5'-triphosphate nucleotidohydrolase (154 aa).

Substrate-binding positions include 64–66, N77, 81–83, and K91; these read RSG and TVD.

It belongs to the dUTPase family. Homotrimer. Mg(2+) serves as cofactor.

It carries out the reaction dUTP + H2O = dUMP + diphosphate + H(+). It functions in the pathway pyrimidine metabolism; dUMP biosynthesis; dUMP from dCTP (dUTP route): step 2/2. Functionally, this enzyme is involved in nucleotide metabolism: it produces dUMP, the immediate precursor of thymidine nucleotides and it decreases the intracellular concentration of dUTP so that uracil cannot be incorporated into DNA. This Mycolicibacterium gilvum (strain PYR-GCK) (Mycobacterium gilvum (strain PYR-GCK)) protein is Deoxyuridine 5'-triphosphate nucleotidohydrolase.